A 220-amino-acid chain; its full sequence is Ribonuclease HII (220 aa).

Residues 1 to 219 (MMIAGIDEAG…VENIREELKK (219 aa)) enclose the RNase H type-2 domain. A divalent metal cation is bound by residues Asp7, Glu8, and Asp105.

This sequence belongs to the RNase HII family. The cofactor is Mn(2+). Mg(2+) serves as cofactor.

Its subcellular location is the cytoplasm. It catalyses the reaction Endonucleolytic cleavage to 5'-phosphomonoester.. Functionally, endonuclease that specifically degrades the RNA of RNA-DNA hybrids. The sequence is that of Ribonuclease HII from Methanosarcina mazei (strain ATCC BAA-159 / DSM 3647 / Goe1 / Go1 / JCM 11833 / OCM 88) (Methanosarcina frisia).